The sequence spans 50 residues: Photosystem II reaction center protein M (50 aa).

A helical transmembrane segment spans residues 7-27 (GFIASLLFVGVPTIFLIGLFI).

It belongs to the PsbM family. As to quaternary structure, PSII is composed of 1 copy each of membrane proteins PsbA, PsbB, PsbC, PsbD, PsbE, PsbF, PsbH, PsbI, PsbJ, PsbK, PsbL, PsbM, PsbT, PsbX, PsbY, Psb30/Ycf12, peripheral proteins PsbO, CyanoQ (PsbQ), PsbU, PsbV and a large number of cofactors. It forms dimeric complexes.

It is found in the cellular thylakoid membrane. One of the components of the core complex of photosystem II (PSII). PSII is a light-driven water:plastoquinone oxidoreductase that uses light energy to abstract electrons from H(2)O, generating O(2) and a proton gradient subsequently used for ATP formation. It consists of a core antenna complex that captures photons, and an electron transfer chain that converts photonic excitation into a charge separation. This subunit is found at the monomer-monomer interface. The protein is Photosystem II reaction center protein M of Prochlorococcus marinus (strain MIT 9312).